Reading from the N-terminus, the 173-residue chain is Ribulose bisphosphate carboxylase small subunit, chloroplastic 5 (173 aa).

The N-terminal 49 residues, 1–49, are a transit peptide targeting the chloroplast; the sequence is MASIPATVATVAQANMVAPFTGLKSNAAFPVTKKVNDFSTLPSNGGRVQ.

This sequence belongs to the RuBisCO small chain family. Heterohexadecamer of 8 large and 8 small subunits.

It localises to the plastid. Its subcellular location is the chloroplast. Its function is as follows. RuBisCO catalyzes two reactions: the carboxylation of D-ribulose 1,5-bisphosphate, the primary event in carbon dioxide fixation, as well as the oxidative fragmentation of the pentose substrate. Both reactions occur simultaneously and in competition at the same active site. Although the small subunit is not catalytic it is essential for maximal activity. This Flaveria pringlei protein is Ribulose bisphosphate carboxylase small subunit, chloroplastic 5.